We begin with the raw amino-acid sequence, 328 residues long: Phosphate acyltransferase (328 aa).

The protein belongs to the PlsX family. As to quaternary structure, homodimer. Probably interacts with PlsY.

Its subcellular location is the cytoplasm. The catalysed reaction is a fatty acyl-[ACP] + phosphate = an acyl phosphate + holo-[ACP]. Its pathway is lipid metabolism; phospholipid metabolism. Its function is as follows. Catalyzes the reversible formation of acyl-phosphate (acyl-PO(4)) from acyl-[acyl-carrier-protein] (acyl-ACP). This enzyme utilizes acyl-ACP as fatty acyl donor, but not acyl-CoA. This is Phosphate acyltransferase from Mycoplasma pneumoniae (strain ATCC 29342 / M129 / Subtype 1) (Mycoplasmoides pneumoniae).